The chain runs to 158 residues: C-type lectin lectoxin-Enh7 (158 aa).

A signal peptide spans 1-23; sequence MGQFTVVSLGLLAVFLSLSGAKG. Intrachain disulfides connect Cys26–Cys37, Cys54–Cys154, and Cys129–Cys146. The C-type lectin domain maps to 33-155; that stretch reads RNGVCNKLFP…CASLHPFICQ (123 aa). The short motif at 119–121 is the Mannose-binding element; the sequence is EPN. 3 residues coordinate Ca(2+): Glu127, Asn142, and Asp143.

It belongs to the true venom lectin family. Expressed by the venom gland.

The protein resides in the secreted. Its function is as follows. Mannose-binding lectin which recognizes specific carbohydrate structures and agglutinates a variety of animal cells by binding to cell-surface glycoproteins and glycolipids. May be a calcium-dependent lectin. The polypeptide is C-type lectin lectoxin-Enh7 (Pseudoferania polylepis (Macleay's water snake)).